The sequence spans 174 residues: Ribosome maturation factor RimM (174 aa).

The 74-residue stretch at 101–174 (AGEFYLADLC…IELLQRWILE (74 aa)) folds into the PRC barrel domain.

It belongs to the RimM family. In terms of assembly, binds ribosomal protein uS19.

Its subcellular location is the cytoplasm. Functionally, an accessory protein needed during the final step in the assembly of 30S ribosomal subunit, possibly for assembly of the head region. Essential for efficient processing of 16S rRNA. May be needed both before and after RbfA during the maturation of 16S rRNA. It has affinity for free ribosomal 30S subunits but not for 70S ribosomes. The polypeptide is Ribosome maturation factor RimM (Treponema pallidum (strain Nichols)).